The chain runs to 426 residues: Serine--tRNA ligase (426 aa).

Residue 233–235 (TSE) participates in L-serine binding. 264–266 (RAE) is an ATP binding site. An L-serine-binding site is contributed by glutamate 287. ATP is bound at residue 351-354 (EISS). Position 387 (serine 387) interacts with L-serine.

Belongs to the class-II aminoacyl-tRNA synthetase family. Type-1 seryl-tRNA synthetase subfamily. In terms of assembly, homodimer. The tRNA molecule binds across the dimer.

Its subcellular location is the cytoplasm. The catalysed reaction is tRNA(Ser) + L-serine + ATP = L-seryl-tRNA(Ser) + AMP + diphosphate + H(+). It carries out the reaction tRNA(Sec) + L-serine + ATP = L-seryl-tRNA(Sec) + AMP + diphosphate + H(+). It functions in the pathway aminoacyl-tRNA biosynthesis; selenocysteinyl-tRNA(Sec) biosynthesis; L-seryl-tRNA(Sec) from L-serine and tRNA(Sec): step 1/1. Its function is as follows. Catalyzes the attachment of serine to tRNA(Ser). Is also able to aminoacylate tRNA(Sec) with serine, to form the misacylated tRNA L-seryl-tRNA(Sec), which will be further converted into selenocysteinyl-tRNA(Sec). The sequence is that of Serine--tRNA ligase from Xanthomonas campestris pv. campestris (strain 8004).